Reading from the N-terminus, the 989-residue chain is Phosphoenolpyruvate carboxylase (989 aa).

Catalysis depends on residues histidine 175 and lysine 630.

It belongs to the PEPCase type 1 family. Mg(2+) serves as cofactor.

It carries out the reaction oxaloacetate + phosphate = phosphoenolpyruvate + hydrogencarbonate. Its function is as follows. Forms oxaloacetate, a four-carbon dicarboxylic acid source for the tricarboxylic acid cycle. This chain is Phosphoenolpyruvate carboxylase, found in Prochlorococcus marinus (strain MIT 9515).